The following is a 59-amino-acid chain: MAKTIKVTQTKSAIGRLPKHKATLTGLGLRRIGHTVELEDTPAVRGMINKVYYMVKVED.

Belongs to the universal ribosomal protein uL30 family. Part of the 50S ribosomal subunit.

This is Large ribosomal subunit protein uL30 from Shewanella amazonensis (strain ATCC BAA-1098 / SB2B).